A 147-amino-acid polypeptide reads, in one-letter code: Large ribosomal subunit protein uL13 (147 aa).

It belongs to the universal ribosomal protein uL13 family. In terms of assembly, part of the 50S ribosomal subunit.

This protein is one of the early assembly proteins of the 50S ribosomal subunit, although it is not seen to bind rRNA by itself. It is important during the early stages of 50S assembly. In Lactobacillus acidophilus (strain ATCC 700396 / NCK56 / N2 / NCFM), this protein is Large ribosomal subunit protein uL13.